The primary structure comprises 227 residues: Mitochondrial inner membrane protease ATP23 (227 aa).

An a divalent metal cation-binding site is contributed by His-124. The active site involves Glu-125. His-128 serves as a coordination point for a divalent metal cation.

It belongs to the peptidase M76 family. In terms of assembly, interacts with ATP6.

It is found in the mitochondrion inner membrane. In terms of biological role, has a dual role in the assembly of mitochondrial ATPase. Acts as a protease that removes the N-terminal 10 residues of mitochondrial ATPase CF(0) subunit 6 (ATP6) at the intermembrane space side. Also involved in the correct assembly of the membrane-embedded ATPase CF(0) particle, probably mediating association of ATP6 with the subunit 9 ring. The sequence is that of Mitochondrial inner membrane protease ATP23 (ATP23) from Saccharomyces cerevisiae (strain Lalvin EC1118 / Prise de mousse) (Baker's yeast).